We begin with the raw amino-acid sequence, 384 residues long: Galactokinase (384 aa).

A substrate-binding site is contributed by 34 to 37 (EHTD). An ATP-binding site is contributed by 123-129 (SSGLSSS). The Mg(2+) site is built by serine 129 and glutamate 161. Aspartate 173 serves as the catalytic Proton acceptor. Substrate is bound at residue tyrosine 222.

It belongs to the GHMP kinase family. GalK subfamily.

It is found in the cytoplasm. The catalysed reaction is alpha-D-galactose + ATP = alpha-D-galactose 1-phosphate + ADP + H(+). It functions in the pathway carbohydrate metabolism; galactose metabolism. Its function is as follows. Catalyzes the transfer of the gamma-phosphate of ATP to D-galactose to form alpha-D-galactose-1-phosphate (Gal-1-P). This chain is Galactokinase, found in Haemophilus influenzae (strain PittEE).